A 192-amino-acid chain; its full sequence is Elongation factor P (192 aa).

The protein belongs to the elongation factor P family.

It localises to the cytoplasm. Its pathway is protein biosynthesis; polypeptide chain elongation. In terms of biological role, involved in peptide bond synthesis. Stimulates efficient translation and peptide-bond synthesis on native or reconstituted 70S ribosomes in vitro. Probably functions indirectly by altering the affinity of the ribosome for aminoacyl-tRNA, thus increasing their reactivity as acceptors for peptidyl transferase. This is Elongation factor P from Borrelia duttonii (strain Ly).